The chain runs to 476 residues: Protein transport protein Sec61 subunit alpha isoform B (476 aa).

At 2–33 the chain is on the cytoplasmic side; that stretch reads GIKFLEVIKPFCAVLPEIQKPERKIQFREKVL. The chain crosses the membrane as a helical span at residues 34-53; that stretch reads WTAITLFIFLVCCQIPLFGI. At 54–76 the chain is on the lumenal side; it reads MSSDSADPFYWMRVILASNRGTL. A helical transmembrane segment spans residues 77-96; sequence MELGISPIVTSGLIMQLLAG. Residues 97 to 117 are Cytoplasmic-facing; sequence AKIIEVGDTPKDRALFNGAQK. The helical transmembrane segment at 118–138 threads the bilayer; the sequence is LFGMIITIGQAIVYVMTGMYG. Topologically, residues 139-144 are lumenal; that stretch reads DPSDMG. Residues 145–165 form a helical membrane-spanning segment; that stretch reads AGICLLIIIQLFVAGLIVLLL. At 166–172 the chain is on the cytoplasmic side; the sequence is DELLQKG. The chain crosses the membrane as a helical span at residues 173-193; that stretch reads YGLGSGISLFIATNICETIVW. Residues 194 to 240 are Lumenal-facing; the sequence is KAFSPTTVNTGRGTEFEGAIIALFHLLATRTDKVRALREAFYRQNLP. Residues 241–261 traverse the membrane as a helical segment; that stretch reads NLMNLLATVFVFGVVIYFQGF. Topologically, residues 262–288 are cytoplasmic; the sequence is RVDLPIKSARYRGQYNTYPIKLFYTSN. The helical transmembrane segment at 289-309 threads the bilayer; sequence IPIILQSALVSNLYVISQMLS. Residues 310–354 are Lumenal-facing; that stretch reads TRFSGNFLVNLLGTWSDTSSGGPARAYPVGGLCYYFSPPESFGSV. A helical transmembrane segment spans residues 355-375; it reads LDDPIHAAIYICFMLGSCAFF. At 376–420 the chain is on the cytoplasmic side; that stretch reads SKTWIEVSGSSAKDVAKQLKEQQMVMRGHRETSMVHELNRYIPTA. A helical membrane pass occupies residues 421–441; that stretch reads AAFGGLCIGGLSVMADFLGAI. The Lumenal segment spans residues 442–445; that stretch reads GSGT. Residues 446-462 traverse the membrane as a helical segment; the sequence is GILLAVTIIYQYFEIFV. Residues 463–476 are Cytoplasmic-facing; that stretch reads KEQSEMGSMGALLF.

The protein belongs to the SecY/SEC61-alpha family. The SEC61 channel-forming translocon complex consists of channel-forming core components SEC61A1, SEC61B and SEC61G and different auxiliary components such as SEC62 and SEC63.

The protein resides in the endoplasmic reticulum membrane. Component of SEC61 channel-forming translocon complex that mediates transport of signal peptide-containing precursor polypeptides across the endoplasmic reticulum (ER). Forms a ribosome receptor and a gated pore in the ER membrane, both functions required for cotranslational translocation of nascent polypeptides. The sequence is that of Protein transport protein Sec61 subunit alpha isoform B (sec61ab) from Oncorhynchus mykiss (Rainbow trout).